Reading from the N-terminus, the 956-residue chain is Glutamate receptor ionotropic, kainate 4 (956 aa).

An N-terminal signal peptide occupies residues 1 to 20 (MPRVSAPLVLLPAWLVMVAC). Topologically, residues 21–545 (SPHSLRIAAI…YFSFLDPFSP (525 aa)) are extracellular. N-linked (GlcNAc...) asparagine glycans are attached at residues asparagine 158, asparagine 220, asparagine 272, asparagine 286, asparagine 323, asparagine 408, asparagine 415, and asparagine 479. Glycine 500, threonine 502, and arginine 507 together coordinate L-glutamate. The helical transmembrane segment at 546 to 566 (GVWLFMLLAYLAVSCVLFLVA) threads the bilayer. Residues 567–623 (RLTPYEWYSPHPCAQGRCNLLVNQYSLGNSLWFPVGGFMQQGSTIAPRALSTRCVSG) are Cytoplasmic-facing. Residues 624–644 (VWWAFTLIIISSYTANLAAFL) form a helical membrane-spanning segment. The Extracellular segment spans residues 645–804 (TVQRMDVPIE…HRAKGLGMEN (160 aa)). L-glutamate-binding residues include serine 674, serine 675, and glutamate 723. N-linked (GlcNAc...) asparagine glycosylation occurs at asparagine 736. A helical transmembrane segment spans residues 805 to 825 (IGGIFVVLICGLIVAIFMAML). The Cytoplasmic segment spans residues 826–956 (EFLWTLRHSE…EKTTNSSEPE (131 aa)). Disordered regions lie at residues 863–889 (RRRA…TLSN) and 931–956 (LRAR…SEPE). Over residues 939-948 (RSEESLEWEK) the composition is skewed to basic and acidic residues.

It belongs to the glutamate-gated ion channel (TC 1.A.10.1) family. GRIK4 subfamily. Homodimer. Can form functional heteromeric receptors with GRIK1, GRIK2 and GRIK3.

Its subcellular location is the cell membrane. It localises to the postsynaptic cell membrane. The protein resides in the presynaptic cell membrane. In terms of biological role, ionotropic glutamate receptor that functions as a cation-permeable ligand-gated ion channel. Cannot form functional channels on its own. Shows channel activity only in heteromeric assembly with GRIK1, GRIK2 and GRIK3 subunits. This Homo sapiens (Human) protein is Glutamate receptor ionotropic, kainate 4 (GRIK4).